The following is a 573-amino-acid chain: Squalene monooxygenase (573 aa).

At 1 to 19 (MWTFLGIATFTYFYKKCGD) the chain is on the cytoplasmic side. An interaction with MARCHF6 region spans residues 1–99 (MWTFLGIATF…EQLESKRRRK (99 aa)). Residues 20–40 (VTLANKELLLCVLVFLSLGLV) lie within the membrane without spanning it. Over 41 to 573 (LSYRCRHRNG…IYSEMKYLVH (533 aa)) the chain is Cytoplasmic. The interval 61–72 (QFAAFSDILSAL) is required for degradation in response to high membrane cholesterol levels. Residues 100–573 (EVNLSETTLT…IYSEMKYLVH (474 aa)) form a sufficient for catalytic activity region. FAD contacts are provided by residues 132–133 (VL), 152–153 (ER), Arg-160, Arg-233, Val-249, Asp-407, and Met-420. Positions 515–573 (PLLLIRHFFSVAVYATYFCFKSEPWATKPRALFSSGAILYKACSIIFPLIYSEMKYLVH) are hydrophobic; mediates interaction with membranes.

The protein belongs to the squalene monooxygenase family. In terms of assembly, interacts (via N-terminal domain) with MARCHF6. Interacts with SMIM22; this interaction modulates lipid droplet formation. It depends on FAD as a cofactor. Post-translationally, ubiquitinated by MARCHF6 in response to high cholesterol levels in intracellular membranes, leading to proteasomal degradation. In terms of tissue distribution, detected in lever (at protein level).

The protein localises to the microsome membrane. The protein resides in the endoplasmic reticulum membrane. It catalyses the reaction squalene + reduced [NADPH--hemoprotein reductase] + O2 = (S)-2,3-epoxysqualene + oxidized [NADPH--hemoprotein reductase] + H2O + H(+). The protein operates within terpene metabolism; lanosterol biosynthesis; lanosterol from farnesyl diphosphate: step 2/3. Inhibited by NB-598 ((E)N-ethyl-N-(6,6-dimethyl-2-hepten-4-ynyl)-3-[(3,3'-bi-thiophen-5-yl)methoxy]benzene-methanamine). Contrary to fungal enzymes, the mammalian enzyme is only slightly inhibited by terbinafine. Its function is as follows. Catalyzes the stereospecific oxidation of squalene to (S)-2,3-epoxysqualene, and is considered to be a rate-limiting enzyme in steroid biosynthesis. In Rattus norvegicus (Rat), this protein is Squalene monooxygenase (Sqle).